The primary structure comprises 434 residues: Glutamate-1-semialdehyde 2,1-aminomutase 1 (434 aa).

Lys268 is modified (N6-(pyridoxal phosphate)lysine).

The protein belongs to the class-III pyridoxal-phosphate-dependent aminotransferase family. HemL subfamily. In terms of assembly, homodimer. Requires pyridoxal 5'-phosphate as cofactor.

It localises to the cytoplasm. It catalyses the reaction (S)-4-amino-5-oxopentanoate = 5-aminolevulinate. Its pathway is porphyrin-containing compound metabolism; protoporphyrin-IX biosynthesis; 5-aminolevulinate from L-glutamyl-tRNA(Glu): step 2/2. The protein is Glutamate-1-semialdehyde 2,1-aminomutase 1 of Shouchella clausii (strain KSM-K16) (Alkalihalobacillus clausii).